The chain runs to 126 residues: Holo-[acyl-carrier-protein] synthase (126 aa).

2 residues coordinate Mg(2+): aspartate 9 and glutamate 58.

This sequence belongs to the P-Pant transferase superfamily. AcpS family. It depends on Mg(2+) as a cofactor.

It is found in the cytoplasm. It carries out the reaction apo-[ACP] + CoA = holo-[ACP] + adenosine 3',5'-bisphosphate + H(+). Its function is as follows. Transfers the 4'-phosphopantetheine moiety from coenzyme A to a Ser of acyl-carrier-protein. This chain is Holo-[acyl-carrier-protein] synthase, found in Buchnera aphidicola subsp. Cinara cedri (strain Cc).